An 89-amino-acid chain; its full sequence is Small ribosomal subunit protein uS15 (89 aa).

It belongs to the universal ribosomal protein uS15 family. Part of the 30S ribosomal subunit. Forms a bridge to the 50S subunit in the 70S ribosome, contacting the 23S rRNA.

Functionally, one of the primary rRNA binding proteins, it binds directly to 16S rRNA where it helps nucleate assembly of the platform of the 30S subunit by binding and bridging several RNA helices of the 16S rRNA. In terms of biological role, forms an intersubunit bridge (bridge B4) with the 23S rRNA of the 50S subunit in the ribosome. This is Small ribosomal subunit protein uS15 from Clavibacter michiganensis subsp. michiganensis (strain NCPPB 382).